The chain runs to 238 residues: Cysteine-rich venom protein pseudechetoxin-like (238 aa).

The first 19 residues, 1–19, serve as a signal peptide directing secretion; sequence MIAFLVLLSLAAVLQQSSG. Residues 20–28 constitute a propeptide that is removed on maturation; the sequence is TVDFASESS. Positions 38-164 constitute an SCP domain; that stretch reads VDKHNDLRRS…STKYLYVCQY (127 aa). 8 disulfide bridges follow: C75–C153, C92–C165, C148–C162, C184–C191, C187–C196, C200–C233, C209–C227, and C218–C231. The region spanning 200-233 is the ShKT domain; it reads CKHNDDLSNCKTLVKKHKCQTEWIKSKCPATCFC.

This sequence belongs to the CRISP family. As to expression, expressed by the venom gland.

The protein resides in the secreted. In terms of biological role, blocks olfactory (CNGA2) and retinal (CNGA1) CNG channel currents. Does not affect neither depolarization- nor caffeine-induced contraction of smooth muscle. The polypeptide is Cysteine-rich venom protein pseudechetoxin-like (Pseudonaja textilis (Eastern brown snake)).